Reading from the N-terminus, the 159-residue chain is MRVGIGYDVHRLVEGRKLIVGGVEIPHEKGLLGHSDADVLLHAIKDALLGAVALGDIGKHFPDTDEKYKGESSLYLLNEVGRMLAEKAYVANNIDATIIAQEPKMAPYIELMRRNIAEVLGIKVEQVNIKATTTEGIGFVGRGEGIAAQAIVSVGQSLG.

The a divalent metal cation site is built by D8 and H10. 4-CDP-2-C-methyl-D-erythritol 2-phosphate contacts are provided by residues 8-10 (DVH) and 34-35 (HS). An a divalent metal cation-binding site is contributed by H42. Residues 56 to 58 (DIG), 61 to 65 (FPDTD), 100 to 106 (AQEPKMA), 132 to 135 (TTTE), F139, and R142 each bind 4-CDP-2-C-methyl-D-erythritol 2-phosphate.

The protein belongs to the IspF family. In terms of assembly, homotrimer. A divalent metal cation is required as a cofactor.

The enzyme catalyses 4-CDP-2-C-methyl-D-erythritol 2-phosphate = 2-C-methyl-D-erythritol 2,4-cyclic diphosphate + CMP. It participates in isoprenoid biosynthesis; isopentenyl diphosphate biosynthesis via DXP pathway; isopentenyl diphosphate from 1-deoxy-D-xylulose 5-phosphate: step 4/6. Functionally, involved in the biosynthesis of isopentenyl diphosphate (IPP) and dimethylallyl diphosphate (DMAPP), two major building blocks of isoprenoid compounds. Catalyzes the conversion of 4-diphosphocytidyl-2-C-methyl-D-erythritol 2-phosphate (CDP-ME2P) to 2-C-methyl-D-erythritol 2,4-cyclodiphosphate (ME-CPP) with a corresponding release of cytidine 5-monophosphate (CMP). The protein is 2-C-methyl-D-erythritol 2,4-cyclodiphosphate synthase of Alkaliphilus metalliredigens (strain QYMF).